The following is a 593-amino-acid chain: Actin-histidine N-methyltransferase (593 aa).

The disordered stretch occupies residues 1–21 (MGKKSRVKTQKSGTGATAAVS). Residues Arg75, 104–106 (EGF), Arg254, 275–279 (DMCNH), and 325–327 (SGF) each bind S-adenosyl-L-methionine. An SET domain is found at 94–314 (EGFEIANFEE…AGEQIYIFYG (221 aa)). The interval 549-593 (GFVNGENSLFNGTKSESENLIKEESNRETEDAKESSSESTDEVKE) is disordered. The span at 553–562 (GENSLFNGTK) shows a compositional bias: polar residues. Over residues 563–593 (SESENLIKEESNRETEDAKESSSESTDEVKE) the composition is skewed to basic and acidic residues.

This sequence belongs to the class V-like SAM-binding methyltransferase superfamily. SETD3 actin-histidine methyltransferase family.

It localises to the cytoplasm. It carries out the reaction L-histidyl-[protein] + S-adenosyl-L-methionine = N(tele)-methyl-L-histidyl-[protein] + S-adenosyl-L-homocysteine + H(+). Functionally, protein-histidine N-methyltransferase that specifically mediates 3-methylhistidine (tele-methylhistidine) methylation of actin at 'His-73'. Does not have protein-lysine N-methyltransferase activity and probably only catalyzes histidine methylation of actin. This chain is Actin-histidine N-methyltransferase, found in Gallus gallus (Chicken).